The chain runs to 417 residues: Serine--tRNA ligase (417 aa).

232 to 234 (TAE) is an L-serine binding site. 263–265 (RKE) serves as a coordination point for ATP. Glutamate 286 is an L-serine binding site. 350–353 (EISS) serves as a coordination point for ATP. Serine 385 contributes to the L-serine binding site.

Belongs to the class-II aminoacyl-tRNA synthetase family. Type-1 seryl-tRNA synthetase subfamily. Homodimer. The tRNA molecule binds across the dimer.

Its subcellular location is the cytoplasm. It catalyses the reaction tRNA(Ser) + L-serine + ATP = L-seryl-tRNA(Ser) + AMP + diphosphate + H(+). The enzyme catalyses tRNA(Sec) + L-serine + ATP = L-seryl-tRNA(Sec) + AMP + diphosphate + H(+). It functions in the pathway aminoacyl-tRNA biosynthesis; selenocysteinyl-tRNA(Sec) biosynthesis; L-seryl-tRNA(Sec) from L-serine and tRNA(Sec): step 1/1. In terms of biological role, catalyzes the attachment of serine to tRNA(Ser). Is also able to aminoacylate tRNA(Sec) with serine, to form the misacylated tRNA L-seryl-tRNA(Sec), which will be further converted into selenocysteinyl-tRNA(Sec). The chain is Serine--tRNA ligase from Sulfurihydrogenibium sp. (strain YO3AOP1).